The primary structure comprises 677 residues: DNA ligase (677 aa).

NAD(+)-binding positions include Asp43–Asp47, Ser92–Met93, and Glu122. Residue Lys124 is the N6-AMP-lysine intermediate of the active site. Positions 145, 179, 295, and 319 each coordinate NAD(+). Cys413, Cys416, Cys431, and Cys436 together coordinate Zn(2+). Residues Thr599–Gln677 form the BRCT domain.

The protein belongs to the NAD-dependent DNA ligase family. LigA subfamily. Mg(2+) serves as cofactor. It depends on Mn(2+) as a cofactor.

The enzyme catalyses NAD(+) + (deoxyribonucleotide)n-3'-hydroxyl + 5'-phospho-(deoxyribonucleotide)m = (deoxyribonucleotide)n+m + AMP + beta-nicotinamide D-nucleotide.. DNA ligase that catalyzes the formation of phosphodiester linkages between 5'-phosphoryl and 3'-hydroxyl groups in double-stranded DNA using NAD as a coenzyme and as the energy source for the reaction. It is essential for DNA replication and repair of damaged DNA. This is DNA ligase from Latilactobacillus sakei subsp. sakei (strain 23K) (Lactobacillus sakei subsp. sakei).